The following is an 862-amino-acid chain: ATP-dependent helicase Lhr-Core (862 aa).

The ATP site is built by glutamine 37, lysine 60, threonine 61, aspartate 178, glutamate 179, valine 360, arginine 377, and histidine 380. The 193-residue stretch at 41 to 233 (IMDIHRGRNV…FLVGYSYGSE (193 aa)) folds into the Helicase ATP-binding domain. A DEAH box motif is present at residues 178–181 (DEIH). The Helicase C-terminal domain maps to 269-424 (ALYDILHDLI…SIKVPENCLD (156 aa)). The segment at 425–513 (VLAQHIYGMA…LYSTNIGTIP (89 aa)) is WH domain. Residues 514–862 (DRSAAVVKCG…HQAIIDEIKR (349 aa)) form a domain 4 region.

This sequence belongs to the Lhr helicase family. Lhr-Core subfamily. As to quaternary structure, monomer.

It catalyses the reaction Couples ATP hydrolysis with the unwinding of duplex DNA by translocating in the 3'-5' direction.. The enzyme catalyses ATP + H2O = ADP + phosphate + H(+). DNA helicase that translocates in a 3'-5' direction on single-stranded (ss)DNA, probably involved in DNA repair. Most active on three- or four-stranded forked DNA; flayed structures and Holliday junction (HJ) substrates are unwound slightly less well. Also unwinds 3'-tailed duplexes; both RNA:DNA hybrids and double-stranded (ds)DNA with a 3'-single strand (ss)DNA loading strand are unwound. Substrates where the helicase loads on a 3'-ssRNA tail (DNA:RNA and RNA:RNA) were not tested. Blunt-ended dsDNA is not a substrate. Probably involved in replication-coupled DNA repair; remodeling of fork DNA after binding by Lhr generates ssDNA for ATP-dependent DNA translocation. This chain is ATP-dependent helicase Lhr-Core, found in Methanothermobacter thermautotrophicus (strain ATCC 29096 / DSM 1053 / JCM 10044 / NBRC 100330 / Delta H) (Methanobacterium thermoautotrophicum).